Here is a 357-residue protein sequence, read N- to C-terminus: Protein pelota homolog (357 aa).

Belongs to the eukaryotic release factor 1 family. Pelota subfamily. As to quaternary structure, monomer. The cofactor is a divalent metal cation.

The protein resides in the cytoplasm. Functionally, may function in recognizing stalled ribosomes, interact with stem-loop structures in stalled mRNA molecules, and effect endonucleolytic cleavage of the mRNA. May play a role in the release non-functional ribosomes and degradation of damaged mRNAs. Has endoribonuclease activity. The polypeptide is Protein pelota homolog (Halobacterium salinarum (strain ATCC 29341 / DSM 671 / R1)).